A 188-amino-acid chain; its full sequence is Gag polyprotein (188 aa).

Residues 77–90 (VGETTVQRDAKMAP) are compositionally biased toward basic and acidic residues. Positions 77-99 (VGETTVQRDAKMAPEETATPKTV) are disordered. The short motif at 121–124 (PPPY) is the PPXY motif element. Residues 130–166 (YPSLAGVGEQQGQGGDTPRGAEQPRAEPGHAGLAPGP) form a disordered region.

In terms of processing, specific enzymatic cleavages in vivo yield mature proteins.

It localises to the virion. This is Gag polyprotein (ev-2) from Galliformes (EV-2).